A 136-amino-acid chain; its full sequence is Large ribosomal subunit protein bL17 (136 aa).

This sequence belongs to the bacterial ribosomal protein bL17 family. As to quaternary structure, part of the 50S ribosomal subunit. Contacts protein L32.

This is Large ribosomal subunit protein bL17 from Rickettsia africae (strain ESF-5).